The primary structure comprises 395 residues: Elongation factor Tu (395 aa).

A tr-type G domain is found at 6–205 (KPHINVGTIG…NALEKIDLPI (200 aa)). Residues 15–22 (GHVDHGKT) form a G1 region. Residue 15–22 (GHVDHGKT) coordinates GTP. Thr22 serves as a coordination point for Mg(2+). A G2 region spans residues 59 to 63 (GITIS). Residues 80–83 (DCPG) form a G3 region. Residues 80–84 (DCPGH) and 135–138 (NKCD) each bind GTP. The G4 stretch occupies residues 135–138 (NKCD). Residues 173–175 (SAV) are G5.

It belongs to the TRAFAC class translation factor GTPase superfamily. Classic translation factor GTPase family. EF-Tu/EF-1A subfamily. As to quaternary structure, monomer.

The protein localises to the cytoplasm. It catalyses the reaction GTP + H2O = GDP + phosphate + H(+). In terms of biological role, GTP hydrolase that promotes the GTP-dependent binding of aminoacyl-tRNA to the A-site of ribosomes during protein biosynthesis. This chain is Elongation factor Tu, found in Ehrlichia ruminantium (strain Gardel).